The primary structure comprises 180 residues: Large ribosomal subunit protein uL10 (180 aa).

Belongs to the universal ribosomal protein uL10 family. As to quaternary structure, part of the ribosomal stalk of the 50S ribosomal subunit. The N-terminus interacts with L11 and the large rRNA to form the base of the stalk. The C-terminus forms an elongated spine to which L12 dimers bind in a sequential fashion forming a multimeric L10(L12)X complex.

Its function is as follows. Forms part of the ribosomal stalk, playing a central role in the interaction of the ribosome with GTP-bound translation factors. The sequence is that of Large ribosomal subunit protein uL10 from Thermosipho africanus (strain TCF52B).